A 128-amino-acid polypeptide reads, in one-letter code: Lutropin subunit beta (128 aa).

Positions 1 to 20 (MERLQGLLLWLLLSPSVVWA) are cleaved as a signal peptide. Intrachain disulfides connect Cys-29-Cys-77, Cys-43-Cys-92, Cys-54-Cys-108, Cys-58-Cys-110, and Cys-113-Cys-120. N-linked (GlcNAc...) asparagine glycosylation is present at Asn-33.

Belongs to the glycoprotein hormones subunit beta family. In terms of assembly, heterodimer of a common alpha chain and a unique beta chain which confers biological specificity to thyrotropin, lutropin, follitropin and gonadotropin.

Its subcellular location is the secreted. Its function is as follows. Promotes spermatogenesis and ovulation by stimulating the testes and ovaries to synthesize steroids. The chain is Lutropin subunit beta (LHB) from Phodopus sungorus (Striped hairy-footed hamster).